We begin with the raw amino-acid sequence, 657 residues long: N-acetylgalactosaminyltransferase 7 (657 aa).

At 1 to 6 (MRLKIG) the chain is on the cytoplasmic side. The chain crosses the membrane as a helical; Signal-anchor for type II membrane protein span at residues 7–29 (FILRSLLVVGSFLGLVVLWSSLT). Topologically, residues 30–657 (PRPDDPSPLS…KWEMNNIHSV (628 aa)) are lumenal. The disordered stretch occupies residues 31–66 (RPDDPSPLSRMREDRDVNDPMPNRGGNGLAPGEDRF). Disulfide bonds link Cys-197-Cys-435, Cys-426-Cys-507, Cys-545-Cys-562, Cys-585-Cys-600, and Cys-625-Cys-640. The catalytic subdomain A stretch occupies residues 206–317 (LLTSSVVIVF…VNWYAPLVAP (112 aa)). Residues Asp-247 and Arg-277 each contribute to the substrate site. Residues Asp-301 and His-303 each coordinate Mn(2+). The segment at 381–443 (PYRSPAMAGG…PCSRVGHIYR (63 aa)) is catalytic subdomain B. A substrate-binding site is contributed by Trp-412. His-440 is a binding site for Mn(2+). A substrate-binding site is contributed by Arg-443. Positions 532–652 (VDWGEIRGFE…SKTTQKWEMN (121 aa)) constitute a Ricin B-type lectin domain.

This sequence belongs to the glycosyltransferase 2 family. GalNAc-T subfamily. The cofactor is Mn(2+).

It localises to the golgi apparatus membrane. The catalysed reaction is L-seryl-[protein] + UDP-N-acetyl-alpha-D-galactosamine = a 3-O-[N-acetyl-alpha-D-galactosaminyl]-L-seryl-[protein] + UDP + H(+). It carries out the reaction L-threonyl-[protein] + UDP-N-acetyl-alpha-D-galactosamine = a 3-O-[N-acetyl-alpha-D-galactosaminyl]-L-threonyl-[protein] + UDP + H(+). The protein operates within protein modification; protein glycosylation. In terms of biological role, glycopeptide transferase involved in O-linked oligosaccharide biosynthesis, which catalyzes the transfer of an N-acetyl-D-galactosamine residue to an already glycosylated peptide. In contrast to other proteins of the family, it does not act as a peptide transferase that transfers GalNAc onto serine or threonine residue on the protein receptor, but instead requires the prior addition of a GalNAc on a peptide before adding additional GalNAc moieties. Some peptide transferase activity is however not excluded, considering that its appropriate peptide substrate may remain unidentified. This chain is N-acetylgalactosaminyltransferase 7 (GALNT7), found in Pongo abelii (Sumatran orangutan).